The following is a 145-amino-acid chain: Ribonuclease H (145 aa).

The RNase H type-1 domain maps to 2-143 (SKKEVAIYTD…ADSLARKAII (142 aa)). Residues Asp-11, Glu-49, Asp-71, and Asp-135 each coordinate Mg(2+).

The protein belongs to the RNase H family. As to quaternary structure, monomer. It depends on Mg(2+) as a cofactor.

The protein localises to the cytoplasm. The enzyme catalyses Endonucleolytic cleavage to 5'-phosphomonoester.. In terms of biological role, endonuclease that specifically degrades the RNA of RNA-DNA hybrids. The polypeptide is Ribonuclease H (Wolbachia sp. subsp. Drosophila simulans (strain wRi)).